The primary structure comprises 168 residues: Urease accessory protein UreE (168 aa).

Residues 137-168 (PESGAYHGTTGHGGGHSHSHGHSHDHHHDHSH) are disordered. Over residues 151-161 (GHSHSHGHSHD) the composition is skewed to basic residues.

The protein belongs to the UreE family.

The protein resides in the cytoplasm. Involved in urease metallocenter assembly. Binds nickel. Probably functions as a nickel donor during metallocenter assembly. The sequence is that of Urease accessory protein UreE from Saccharophagus degradans (strain 2-40 / ATCC 43961 / DSM 17024).